We begin with the raw amino-acid sequence, 232 residues long: MTNADPHELQKFSDLAHRWWDPNAEFKPLHELNPIRLKWIDAHAHLAGKTVLDIGCGGGILSESMAGLGAHVKGIDLSTQALGVADLHSLESGVTVDYEEIAAEALAAREPAKYDVVTCMEMLEHVPQPAAIVEACKTLVKPGGWVFFSTLNRNVKSYLFAVIGAEYIARMLPKGTHDYARFIRPSELASFVRAADLRTADIKGIVYNPLSKHFMLSADTSVNYMLACRRDV.

Residues R36, G55, D76, and M120 each contribute to the S-adenosyl-L-methionine site.

This sequence belongs to the methyltransferase superfamily. UbiG/COQ3 family.

The enzyme catalyses a 3-demethylubiquinol + S-adenosyl-L-methionine = a ubiquinol + S-adenosyl-L-homocysteine + H(+). It carries out the reaction a 3-(all-trans-polyprenyl)benzene-1,2-diol + S-adenosyl-L-methionine = a 2-methoxy-6-(all-trans-polyprenyl)phenol + S-adenosyl-L-homocysteine + H(+). Its pathway is cofactor biosynthesis; ubiquinone biosynthesis. Its function is as follows. O-methyltransferase that catalyzes the 2 O-methylation steps in the ubiquinone biosynthetic pathway. This chain is Ubiquinone biosynthesis O-methyltransferase, found in Paraburkholderia phytofirmans (strain DSM 17436 / LMG 22146 / PsJN) (Burkholderia phytofirmans).